We begin with the raw amino-acid sequence, 166 residues long: UPF0179 protein Tneu_1978 (166 aa).

The tract at residues 140-166 is disordered; that stretch reads PPSPSKSGGATASRDPSRAPPSRPLSK. Residues 157 to 166 show a composition bias toward pro residues; sequence RAPPSRPLSK.

It belongs to the UPF0179 family.

This chain is UPF0179 protein Tneu_1978, found in Pyrobaculum neutrophilum (strain DSM 2338 / JCM 9278 / NBRC 100436 / V24Sta) (Thermoproteus neutrophilus).